Here is a 409-residue protein sequence, read N- to C-terminus: NADH-quinone oxidoreductase subunit D (409 aa).

This sequence belongs to the complex I 49 kDa subunit family. As to quaternary structure, NDH-1 is composed of 14 different subunits. Subunits NuoB, C, D, E, F, and G constitute the peripheral sector of the complex.

The protein localises to the cell inner membrane. The enzyme catalyses a quinone + NADH + 5 H(+)(in) = a quinol + NAD(+) + 4 H(+)(out). NDH-1 shuttles electrons from NADH, via FMN and iron-sulfur (Fe-S) centers, to quinones in the respiratory chain. The immediate electron acceptor for the enzyme in this species is believed to be ubiquinone. Couples the redox reaction to proton translocation (for every two electrons transferred, four hydrogen ions are translocated across the cytoplasmic membrane), and thus conserves the redox energy in a proton gradient. This Helicobacter acinonychis (strain Sheeba) protein is NADH-quinone oxidoreductase subunit D.